We begin with the raw amino-acid sequence, 427 residues long: GTPase Obg (427 aa).

Residues 1-158 enclose the Obg domain; sequence MFVDIAKIYV…LWVILELKVL (158 aa). One can recognise an OBG-type G domain in the interval 159 to 330; the sequence is ADVGLIGYPN…VLKRAYELLK (172 aa). GTP is bound by residues 165–172, 190–194, 212–215, 282–285, and 311–313; these read GYPNVGKS, FTTKY, DIPG, NKMD, and SAA. Mg(2+)-binding residues include serine 172 and threonine 192. An OCT domain is found at 347–427; the sequence is FVYYKKKDVK…ILDVEFEYYE (81 aa).

This sequence belongs to the TRAFAC class OBG-HflX-like GTPase superfamily. OBG GTPase family. Monomer. It depends on Mg(2+) as a cofactor.

The protein resides in the cytoplasm. Its function is as follows. An essential GTPase which binds GTP, GDP and possibly (p)ppGpp with moderate affinity, with high nucleotide exchange rates and a fairly low GTP hydrolysis rate. Plays a role in control of the cell cycle, stress response, ribosome biogenesis and in those bacteria that undergo differentiation, in morphogenesis control. This Caldicellulosiruptor bescii (strain ATCC BAA-1888 / DSM 6725 / KCTC 15123 / Z-1320) (Anaerocellum thermophilum) protein is GTPase Obg.